The chain runs to 309 residues: Hydroxyacylglutathione hydrolase, mitochondrial (309 aa).

A mitochondrion-targeting transit peptide spans 1-24 (MVLGRGSLCLRSLSALGATCARRG). Lys90 carries the N6-acetyllysine modification. Residues His103, His105, Asp107, and His108 each contribute to the Zn(2+) site. At Lys117 the chain carries N6-acetyllysine. Residues His159 and Asp183 each coordinate Zn(2+). Residues 192–194 (KFY) and 222–224 (HEY) each bind substrate. His222 contacts Zn(2+). Position 230 is an N6-acetyllysine; alternate (Lys230). An N6-succinyllysine; alternate modification is found at Lys230. 298 to 301 (RREK) contacts substrate.

It belongs to the metallo-beta-lactamase superfamily. Glyoxalase II family. In terms of assembly, monomer. Zn(2+) serves as cofactor.

The protein resides in the mitochondrion matrix. It is found in the cytoplasm. The catalysed reaction is an S-(2-hydroxyacyl)glutathione + H2O = a 2-hydroxy carboxylate + glutathione + H(+). The enzyme catalyses (R)-S-lactoylglutathione + H2O = (R)-lactate + glutathione + H(+). It functions in the pathway secondary metabolite metabolism; methylglyoxal degradation; (R)-lactate from methylglyoxal: step 2/2. Thiolesterase that catalyzes the hydrolysis of S-D-lactoyl-glutathione to form glutathione and D-lactic acid. In Mus musculus (Mouse), this protein is Hydroxyacylglutathione hydrolase, mitochondrial (Hagh).